The primary structure comprises 113 residues: Beta-microseminoprotein (113 aa).

An N-terminal signal peptide occupies residues 1–20 (MKARLGSLLVLATLVTASNA). Cystine bridges form between Cys22-Cys69, Cys38-Cys61, Cys56-Cys92, Cys59-Cys68, and Cys83-Cys106.

It belongs to the beta-microseminoprotein family. Homodimer; Interacts with PI16.

The protein resides in the secreted. The sequence is that of Beta-microseminoprotein (Msmb) from Rattus norvegicus (Rat).